The primary structure comprises 717 residues: Pre-mRNA-splicing factor ATP-dependent RNA helicase DEAH10 (717 aa).

A disordered region spans residues 1 to 29 (MPSMAQGELKSFVQNSRPNPKSPTVSPFS). Polar residues predominate over residues 12–29 (FVQNSRPNPKSPTVSPFS). Residues 51–256 (VEEVQKNDIL…FGGAKAVHVQ (206 aa)) form the Helicase ATP-binding domain. 64-71 (GETGSGKT) is an ATP binding site. The DEAH box signature appears at 162–165 (DEAH). The 176-residue stretch at 278–453 (TLVTIFQIHF…NIILQLKALG (176 aa)) folds into the Helicase C-terminal domain.

The protein belongs to the DEAD box helicase family. DEAH subfamily. PRP22 sub-subfamily. In terms of tissue distribution, widely expressed but spatially and temporally regulated during development.

It is found in the nucleus. The protein resides in the nucleolus. It catalyses the reaction ATP + H2O = ADP + phosphate + H(+). Functionally, involved in pre-mRNA splicing. Plays a role during development in processes such as meristem maintenance, leaf morphogenesis and root morphogenesis. The protein is Pre-mRNA-splicing factor ATP-dependent RNA helicase DEAH10 of Arabidopsis thaliana (Mouse-ear cress).